The sequence spans 542 residues: Glutamyl-tRNA(Gln) amidotransferase subunit B, mitochondrial (542 aa).

Residues 1–66 constitute a mitochondrion transit peptide; the sequence is MRVFRRFYQV…PNSHTSFFDI (66 aa).

It belongs to the GatB/GatE family. GatB subfamily. As to quaternary structure, subunit of the heterotrimeric GatFAB amidotransferase (AdT) complex, composed of A, B and F subunits.

It is found in the mitochondrion. It catalyses the reaction L-glutamyl-tRNA(Gln) + L-glutamine + ATP + H2O = L-glutaminyl-tRNA(Gln) + L-glutamate + ADP + phosphate + H(+). Allows the formation of correctly charged Gln-tRNA(Gln) through the transamidation of misacylated Glu-tRNA(Gln) in the mitochondria. The reaction takes place in the presence of glutamine and ATP through an activated gamma-phospho-Glu-tRNA(Gln). This Zygosaccharomyces rouxii (strain ATCC 2623 / CBS 732 / NBRC 1130 / NCYC 568 / NRRL Y-229) protein is Glutamyl-tRNA(Gln) amidotransferase subunit B, mitochondrial.